The chain runs to 220 residues: UPF0758 protein Asuc_0013 (220 aa).

Residues 98–220 (EFTNPLTVRL…YFSFAEQDWL (123 aa)) enclose the MPN domain. 3 residues coordinate Zn(2+): histidine 169, histidine 171, and aspartate 182. The JAMM motif signature appears at 169 to 182 (HNHPSGSAEPSASD).

It belongs to the UPF0758 family.

The chain is UPF0758 protein Asuc_0013 from Actinobacillus succinogenes (strain ATCC 55618 / DSM 22257 / CCUG 43843 / 130Z).